A 342-amino-acid polypeptide reads, in one-letter code: GTPase Obg (342 aa).

One can recognise an Obg domain in the interval 1 to 159 (MQFIDQAKIE…KQLRLELKLL (159 aa)). Residues 160–330 (AEVGIIGLPN…MLQEIWGILD (171 aa)) form the OBG-type G domain. GTP contacts are provided by residues 166–173 (GLPNAGKS), 191–195 (FTTLI), 213–216 (DIPG), 280–283 (NKID), and 311–313 (SAV). The Mg(2+) site is built by S173 and T193.

The protein belongs to the TRAFAC class OBG-HflX-like GTPase superfamily. OBG GTPase family. As to quaternary structure, monomer. Mg(2+) serves as cofactor.

Its subcellular location is the cytoplasm. In terms of biological role, an essential GTPase which binds GTP, GDP and possibly (p)ppGpp with moderate affinity, with high nucleotide exchange rates and a fairly low GTP hydrolysis rate. Plays a role in control of the cell cycle, stress response, ribosome biogenesis and in those bacteria that undergo differentiation, in morphogenesis control. The polypeptide is GTPase Obg (Nostoc punctiforme (strain ATCC 29133 / PCC 73102)).